A 504-amino-acid chain; its full sequence is Protein DETOXIFICATION 38 (504 aa).

The next 12 membrane-spanning stretches (helical) occupy residues 56–76, 90–110, 139–159, 170–190, 208–228, 234–254, 273–295, 316–336, 356–376, 401–421, 433–453, and 457–477; these read LLLR…GMGI, LAAA…MLGM, IVLA…YPIL, YMGS…AVYF, ISAA…YAMG, IAYV…FYVI, GLWS…LWYT, SICM…NAAV, TWTA…VVIA, FLAV…VAVG, IGCY…TFNF, and GIWT…LYVT.

Belongs to the multi antimicrobial extrusion (MATE) (TC 2.A.66.1) family.

The protein localises to the membrane. This chain is Protein DETOXIFICATION 38, found in Arabidopsis thaliana (Mouse-ear cress).